Consider the following 484-residue polypeptide: MDAGWKFDNSYARLPERFFSKVLPTPVRAPKLAVLNRSLAVKLGLNEEALRSEDGVAVFGGNQIPGGAEPLAQAYAGHQFGYFTMLGDGRAVLLGEHVTPSGERVDIQLKGSGRTPYSRGGDGRAALGPMLREYIVSEAMHALGIPTTRSLAVVTTGETIMRETELPGAVLTRVASSHLRVGTFQYAAQWGTIEELRALADYALWRHFPGFEEAENRYLFLLEQVIERQAELIAKWQLVGFVHGVMNTDNMTISGETIDYGPCAFMDTYSLETVFSSIDTEGRYAYGNQPYIGGWNLARFAESLLPLLDENEEKAIALAQGALDEYPKRYHHHWLSGMRAKLGLAEEQEGDQELIADLLRLMEAHRADYTNTFRALTLGEYTGMALFDSAEFREWQERWQTRLSQESVSREEAYERMRRHNPAVIPRNHRVEEALAAAVHDGDYSVMERFLEALSDPYAYSPEQEKYAELPPPSDRPYRTFCGT.

Positions 87, 89, 90, 110, 122, 123, 173, and 180 each coordinate ATP. The active-site Proton acceptor is the D249. Positions 250 and 259 each coordinate Mg(2+). D259 provides a ligand contact to ATP. Positions 463 to 484 (EQEKYAELPPPSDRPYRTFCGT) are disordered.

The protein belongs to the SELO family. It depends on Mg(2+) as a cofactor. Mn(2+) is required as a cofactor.

It catalyses the reaction L-seryl-[protein] + ATP = 3-O-(5'-adenylyl)-L-seryl-[protein] + diphosphate. The catalysed reaction is L-threonyl-[protein] + ATP = 3-O-(5'-adenylyl)-L-threonyl-[protein] + diphosphate. The enzyme catalyses L-tyrosyl-[protein] + ATP = O-(5'-adenylyl)-L-tyrosyl-[protein] + diphosphate. It carries out the reaction L-histidyl-[protein] + UTP = N(tele)-(5'-uridylyl)-L-histidyl-[protein] + diphosphate. It catalyses the reaction L-seryl-[protein] + UTP = O-(5'-uridylyl)-L-seryl-[protein] + diphosphate. The catalysed reaction is L-tyrosyl-[protein] + UTP = O-(5'-uridylyl)-L-tyrosyl-[protein] + diphosphate. Its function is as follows. Nucleotidyltransferase involved in the post-translational modification of proteins. It can catalyze the addition of adenosine monophosphate (AMP) or uridine monophosphate (UMP) to a protein, resulting in modifications known as AMPylation and UMPylation. The chain is Protein nucleotidyltransferase YdiU from Geobacillus kaustophilus (strain HTA426).